The sequence spans 312 residues: MKPSPRTPDFSPYLDFDRAQWRELRNSMPQVLTQKEVIELRGIGENIDLAEVAEVYLPLSRLIHLQVAARQQLTAATETFLGTSPSISVPFVIGVAGSVAVGKSTTARLLQVLLQRWNSHPRVDLVTTDGFLYPGAELIRRGLMSRKGFPESYDQRALLRFVTDVKSGKLEVNAPVYSHTAYDRVPGEFTTVRQPDILIVEGLNVLQTGPTLMVSDLFDFSVYVDARTEDIEKWYIDRFLKLRDTAFRRPGAHFSHYADMADPESIAVARELWQSINLPNLVENILPTRVRASLVLKKGSDHLVERVRMRKI.

97-104 (GSVAVGKS) is a binding site for ATP.

This sequence belongs to the prokaryotic pantothenate kinase family.

Its subcellular location is the cytoplasm. It catalyses the reaction (R)-pantothenate + ATP = (R)-4'-phosphopantothenate + ADP + H(+). Its pathway is cofactor biosynthesis; coenzyme A biosynthesis; CoA from (R)-pantothenate: step 1/5. The polypeptide is Pantothenate kinase (Corynebacterium glutamicum (strain ATCC 13032 / DSM 20300 / JCM 1318 / BCRC 11384 / CCUG 27702 / LMG 3730 / NBRC 12168 / NCIMB 10025 / NRRL B-2784 / 534)).